Reading from the N-terminus, the 259-residue chain is MLMVISPAKTLDYDTPPITERFTQPQYLDHSQQLIELLRRYSPAQISELMHLSDKLAALNVARYGSWTPAFTPSNAKQALLAFKGDVYTGLNADDFTEDDLLFAQKHLRMLSGLYGLLRPLDLMQPYRLEMGTKLTNPRGKDLYAFWGERISDWLNEALADQGDDVLLNLASNEYFSAVKRNALNARIINVDFKDMKNGQYKIISFYAKKARGLMARWIIKERISTPDQLSAFDYEGYRYSANDSSADHLVFLRDASDQ.

It belongs to the UPF0246 family.

The sequence is that of UPF0246 protein PST_1170 from Stutzerimonas stutzeri (strain A1501) (Pseudomonas stutzeri).